A 505-amino-acid polypeptide reads, in one-letter code: MTEPEPTLEQEPTPEPEPTQEPTPEPTPEPEPTQEPESEPELELKQENGCTKASEQKSPEEFEPPEGGWGWVVMLASMWCNGSVFGIQNAFGIMFVYLLNEFGSEHDADLRFKTAWVGSLSMGMIFFCSPIVSVFTDLLGCRITAVGGAAVGCVGLLASSFVTSLGPMYFTYGIVFACGCSFAYQPSLVILGHYFKRRLGLVNGIVTAGSSVFTITLPYMLSGLLKSVGLYHTLRVLAIFMFILMLAGLTYKPLLPKPVSSSKPGSRCPPLSRIFNVNIWKSLGYRIWAFGIPAALYGYFVPYVHLMTHVEERFGPEANKEVLLACIGITSGVGRLIFGRVADYVPGVNKVFLQVSSFMVIGVMSMMIPLCHVFGGLIAVCLLMGLFDGCFICIMAPIAFELVGSQNVSQAIGFLLGMMSIPMTVGPPIAGFLRDRLGSYDVAFYLAGIPPLIGGAVLCAIPWVEARRKRREAANTAENTEKMLESRSPPLEDTVCRTEEPESVI.

Residues 1 to 14 show a composition bias toward acidic residues; that stretch reads MTEPEPTLEQEPTP. A disordered region spans residues 1-64; sequence MTEPEPTLEQ…EQKSPEEFEP (64 aa). Residues 1-66 are Cytoplasmic-facing; sequence MTEPEPTLEQ…KSPEEFEPPE (66 aa). Residues 15-31 are compositionally biased toward pro residues; the sequence is EPEPTQEPTPEPTPEPE. A compositionally biased stretch (acidic residues) spans 32 to 41; that stretch reads PTQEPESEPE. Residues 67 to 87 traverse the membrane as a helical segment; sequence GGWGWVVMLASMWCNGSVFGI. The Extracellular portion of the chain corresponds to 88-114; it reads QNAFGIMFVYLLNEFGSEHDADLRFKT. A helical transmembrane segment spans residues 115-135; that stretch reads AWVGSLSMGMIFFCSPIVSVF. Residues 136 to 142 are Cytoplasmic-facing; the sequence is TDLLGCR. The helical transmembrane segment at 143-163 threads the bilayer; it reads ITAVGGAAVGCVGLLASSFVT. Topologically, residues 164-171 are extracellular; sequence SLGPMYFT. A helical transmembrane segment spans residues 172 to 192; sequence YGIVFACGCSFAYQPSLVILG. Residues 193–204 lie on the Cytoplasmic side of the membrane; the sequence is HYFKRRLGLVNG. A helical transmembrane segment spans residues 205-225; sequence IVTAGSSVFTITLPYMLSGLL. The Extracellular portion of the chain corresponds to 226 to 235; sequence KSVGLYHTLR. Residues 236–256 traverse the membrane as a helical segment; that stretch reads VLAIFMFILMLAGLTYKPLLP. Over 257–286 the chain is Cytoplasmic; it reads KPVSSSKPGSRCPPLSRIFNVNIWKSLGYR. The chain crosses the membrane as a helical span at residues 287–307; that stretch reads IWAFGIPAALYGYFVPYVHLM. At 308 to 321 the chain is on the extracellular side; it reads THVEERFGPEANKE. The chain crosses the membrane as a helical span at residues 322–342; the sequence is VLLACIGITSGVGRLIFGRVA. Residue aspartate 343 is a topological domain, cytoplasmic. The chain crosses the membrane as a helical span at residues 344–364; that stretch reads YVPGVNKVFLQVSSFMVIGVM. The Extracellular portion of the chain corresponds to 365 to 377; sequence SMMIPLCHVFGGL. The helical transmembrane segment at 378–400 threads the bilayer; sequence IAVCLLMGLFDGCFICIMAPIAF. At 401-411 the chain is on the cytoplasmic side; that stretch reads ELVGSQNVSQA. Residues 412 to 432 form a helical membrane-spanning segment; sequence IGFLLGMMSIPMTVGPPIAGF. Topologically, residues 433–443 are extracellular; that stretch reads LRDRLGSYDVA. The chain crosses the membrane as a helical span at residues 444–464; sequence FYLAGIPPLIGGAVLCAIPWV. The Cytoplasmic segment spans residues 465–505; sequence EARRKRREAANTAENTEKMLESRSPPLEDTVCRTEEPESVI. The segment at 474-505 is disordered; it reads ANTAENTEKMLESRSPPLEDTVCRTEEPESVI. A compositionally biased stretch (basic and acidic residues) spans 494–505; that stretch reads TVCRTEEPESVI.

It belongs to the major facilitator superfamily. Monocarboxylate porter (TC 2.A.1.13) family.

It localises to the cell membrane. The protein resides in the basolateral cell membrane. The catalysed reaction is L-tryptophan(in) = L-tryptophan(out). It catalyses the reaction L-tyrosine(in) = L-tyrosine(out). It carries out the reaction L-phenylalanine(in) = L-phenylalanine(out). The enzyme catalyses 3,3',5-triiodo-L-thyronine(out) = 3,3',5-triiodo-L-thyronine(in). The catalysed reaction is L-thyroxine(out) = L-thyroxine(in). In terms of biological role, sodium- and proton-independent thyroid hormones and aromatic acids transporter. Mediates both uptake and efflux of 3,5,3'-triiodothyronine (T3) and 3,5,3',5'-tetraiodothyronine (T4) with high affinity, suggesting a role in the homeostasis of thyroid hormone levels. Responsible for low affinity bidirectional transport of the aromatic amino acids, such as phenylalanine, tyrosine, tryptophan and L-3,4-dihydroxyphenylalanine (L-dopa). Plays an important role in homeostasis of aromatic amino acids. The polypeptide is Monocarboxylate transporter 10 (slc16a10) (Danio rerio (Zebrafish)).